The chain runs to 359 residues: tRNA pseudouridine synthase B (359 aa).

Residue D63 is the Nucleophile of the active site.

This sequence belongs to the pseudouridine synthase TruB family. Type 1 subfamily.

It carries out the reaction uridine(55) in tRNA = pseudouridine(55) in tRNA. Responsible for synthesis of pseudouridine from uracil-55 in the psi GC loop of transfer RNAs. The sequence is that of tRNA pseudouridine synthase B from Psychrobacter cryohalolentis (strain ATCC BAA-1226 / DSM 17306 / VKM B-2378 / K5).